Here is a 617-residue protein sequence, read N- to C-terminus: Kelch-like protein diablo (617 aa).

Residues 1-55 are disordered; it reads MGDPLLPGSTGLGSGGTAAATGGTGTTGTGLGSGGTSGTERPPSPARLTHTSEKH. The segment covering 10-37 has biased composition (gly residues); the sequence is TGLGSGGTAAATGGTGTTGTGLGSGGTS. The region spanning 73–140 is the BTB domain; sequence CDVVLNVGGR…CYTAHIIVEE (68 aa). Residues 175–277 form the BACK domain; sequence CLGIRAFADT…SPKFLVGTVG (103 aa). 6 Kelch repeats span residues 324–370, 372–418, 419–465, 467–512, 514–559, and 560–606; these read VLFA…VLND, LYAV…VLDG, FLYA…VLSG, LYAI…VFNN, IYAV…VVNG, and QLYA…VMRA.

It functions in the pathway protein modification; protein ubiquitination. In terms of biological role, probable substrate-specific adapter of an E3 ubiquitin-protein ligase complex which mediates the ubiquitination and subsequent proteasomal degradation of target proteins. May have a role in synapse differentiation and growth. This chain is Kelch-like protein diablo, found in Drosophila mojavensis (Fruit fly).